Consider the following 475-residue polypeptide: NADH-ubiquinone oxidoreductase chain 2 (475 aa).

13 helical membrane-spanning segments follow: residues 45 to 65 (LAVLALSFVAYLAWESIGIQY), 82 to 102 (APIVLLLIILVITLLVYLTTT), 112 to 132 (IALLMLVNLIGLILFPMVNDL), 133 to 153 (IPLYVIIELQSYSLYLLTGVY), 162 to 182 (AAILYFVTGGIASVLILLSSA), 198 to 220 (TYYSISGINTWTSFDILLIALVF), 240 to 260 (LYITAYISIVAKVSIMSFIYL), 262 to 282 (IHLFSTQLLILAFYLSVAVAA), 291 to 311 (IKSILAYSGILNFGYLLTAVL), 318 to 338 (YIYIIQYSLTHVTIFLCILAI), 365 to 385 (LCIALIVCLFSLIGIPPLPGF), 402 to 422 (LEALTIIVFSVIATYYYAYII), and 447 to 467 (FIISILMVILITFYMYLPTLL).

The protein belongs to the complex I subunit 2 family.

It is found in the mitochondrion inner membrane. The catalysed reaction is a ubiquinone + NADH + 5 H(+)(in) = a ubiquinol + NAD(+) + 4 H(+)(out). In terms of biological role, core subunit of the mitochondrial membrane respiratory chain NADH dehydrogenase (Complex I) that is believed to belong to the minimal assembly required for catalysis. Complex I functions in the transfer of electrons from NADH to the respiratory chain. The immediate electron acceptor for the enzyme is believed to be ubiquinone. This chain is NADH-ubiquinone oxidoreductase chain 2 (NAD2), found in Candida albicans (strain SC5314 / ATCC MYA-2876) (Yeast).